The chain runs to 1105 residues: Serine/threonine-protein kinase Warts (1105 aa).

Positions 33 to 54 (VQNNHRNNQNYTPLRYTATNGR) are enriched in polar residues. Disordered stretches follow at residues 33–81 (VQNN…APDV), 145–253 (CSPA…TQNG), 273–362 (GGGS…YQAR), 383–462 (QTAV…EPPS), and 514–643 (AQRE…RKEF). The segment covering 69 to 81 (MEPPPSASPAPDV) has biased composition (pro residues). A compositionally biased stretch (polar residues) spans 242-253 (QRGNSPVITQNG). The segment covering 307-320 (SMQSRQSPTQSQQS) has biased composition (low complexity). A compositionally biased stretch (polar residues) spans 325–343 (SPSSGIYSATSAGSPSPIT). Composition is skewed to low complexity over residues 387–400 (APQSPSSASASNSP) and 415–437 (AAVVQQQQQAAAAAHQQQHQHQQ). Over residues 515–533 (QRERDQRERDQRERERDQQ) the composition is skewed to basic and acidic residues. 2 stretches are compositionally biased toward low complexity: residues 551-576 (QSNNNNNSEIKPPSCNNNNIQISNSN) and 589-616 (NNNSSNTGANSSGGSNGSTGTTASSSTS). The segment covering 627-643 (PERKKISKEKEEERKEF) has biased composition (basic and acidic residues). In terms of domain architecture, Protein kinase spans 719 to 1020 (FVKLKPIGVG…VDEVKSHDFF (302 aa)). ATP-binding positions include 725–733 (IGVGAFGEV) and lysine 749. Residue aspartate 843 is the Proton acceptor of the active site. Disordered stretches follow at residues 881-900 (GNHSRQDSMEPWEEYSENGP) and 1038-1070 (EIKHPTDTSNFDPVDPEKLRSNDSTMSSGDDVD). The AGC-kinase C-terminal domain maps to 1021-1091 (KGIDFADMRK…FTFRRFFDDK (71 aa)).

It belongs to the protein kinase superfamily. AGC Ser/Thr protein kinase family. As to quaternary structure, interacts with yki. Interacts with jub. It depends on Mg(2+) as a cofactor.

Its subcellular location is the cytoplasm. It localises to the cytosol. It is found in the cytoskeleton. The protein localises to the microtubule organizing center. The protein resides in the centrosome. It carries out the reaction L-seryl-[protein] + ATP = O-phospho-L-seryl-[protein] + ADP + H(+). The catalysed reaction is L-threonyl-[protein] + ATP = O-phospho-L-threonyl-[protein] + ADP + H(+). Functionally, negative regulator of Yorkie (Yki) in the Hippo/SWH (Sav/Wts/Hpo) signaling pathway that plays a pivotal role in organ size control and tumor suppression by restricting proliferation and promoting apoptosis. The core of this pathway is composed of a kinase cascade wherein Hippo (Hpo), in complex with its regulatory protein Salvador (Sav), phosphorylates and activates Warts (Wts) in complex with its regulatory protein Mats, which in turn phosphorylates and inactivates the Yorkie (Yki) oncoprotein. The Hippo/SWH signaling pathway inhibits the activity of the transcriptional complex formed by Scalloped (sd) and Yki and the target genes of this pathway include cyclin-E (cycE), diap1 and bantam. Inhibits nuclear localization of Yki. Regulates salivary gland degradation in a PI3K-dependent manner and Yki- and Sd-independent, mechanism. The protein is Serine/threonine-protein kinase Warts (wts) of Drosophila melanogaster (Fruit fly).